A 189-amino-acid polypeptide reads, in one-letter code: Potassium-transporting ATPase KdpC subunit (189 aa).

The chain crosses the membrane as a helical span at residues 5-25; it reads LLPALTMLLVFTVITGIVYPL.

This sequence belongs to the KdpC family. As to quaternary structure, the system is composed of three essential subunits: KdpA, KdpB and KdpC.

It localises to the cell membrane. In terms of biological role, part of the high-affinity ATP-driven potassium transport (or Kdp) system, which catalyzes the hydrolysis of ATP coupled with the electrogenic transport of potassium into the cytoplasm. This subunit acts as a catalytic chaperone that increases the ATP-binding affinity of the ATP-hydrolyzing subunit KdpB by the formation of a transient KdpB/KdpC/ATP ternary complex. This Mycobacterium bovis (strain ATCC BAA-935 / AF2122/97) protein is Potassium-transporting ATPase KdpC subunit.